Consider the following 873-residue polypeptide: MASRRKSTTPCMVLASEQDPDLELISDLDEGPPVLTPVENTRAESISSDEEVHESVDSDNQQNKKVEGGYECKYCTFQTPDLNMFTFHVDSEHPNVVLNSSYVCVECNFLTKRYDALSEHNLKYHPGEENFKLTMVKRNNQTIFEQTINDLTFDGSFVKEENAEQAESTEVSSSGISISKTPIMKMMKNKVENKRIAVHHNSVEDVPEEKENEIKPDREETVENPSSSASESNTSTSIVNRIHPSTASTVVTPAAVLPGLAQVITAVSAQQNSNLIPKVLIPVNSIPTYNAALDNNPLLLNTYNKFPYPTMSEITVLSAQAKYTEEQIKIWFSAQRLKHGVSWTPEEVEEARRKQFNGTVHTVPQTITVIPTHISTGSNGLPSILQTCQIVGQPGLVLTQVAGTNTLPVTAPIALTVAGVPSQNNVQKSQVPAAQPTAETKPATAAVPTSQSVKHETALVNPDSFGIRAKKTKEQLAELKVSYLKNQFPHDSEIIRLMKITGLTKGEIKKWFSDTRYNQRNSKSNQCLHLNNDSSTTIIIDSSDETTESPTVGTVQPKQSWNPFPDFTPQKFKEKTAEQLRVLQASFLNNSVLTDEELNRLRAQTKLTRREIDAWFTEKKKSKALKEEKMEIDESNAGSSKEEAGETSPGDESGAPKSGSTGKICKKTPEQLHMLKSAFVRTQWPSPEEYDKLAKESGLARTDIVSWFGDTRYAWKNGNLKWYYYYQSANSSSMNGLSSLRKRGRGRPKGRGRGRPRGRPRGSKRINNWDRGPSLIKFKTGTAILKDYYLKHKFLNEQDLDELVNKSHMGYEQVREWFAERQRRSELGIELFEENEEEDEVIDDQEEDEEETDDSDTWEPPRHVKRKLSKSDD.

Residues 24–63 are disordered; that stretch reads LISDLDEGPPVLTPVENTRAESISSDEEVHESVDSDNQQN. Residue Thr36 is modified to Phosphothreonine. Phosphoserine occurs at positions 45, 47, and 48. 2 consecutive C2H2-type zinc fingers follow at residues 70–93 and 102–125; these read YECK…DSEH and YVCV…LKYH. A Glycyl lysine isopeptide (Lys-Gly) (interchain with G-Cter in SUMO2) cross-link involves residue Lys159. Residues 198–236 are disordered; the sequence is VHHNSVEDVPEEKENEIKPDREETVENPSSSASESNTST. Position 202 is a phosphoserine (Ser202). Residues 212–221 show a composition bias toward basic and acidic residues; sequence NEIKPDREET. Residues 223–236 are compositionally biased toward low complexity; the sequence is ENPSSSASESNTST. Residues 272–432 form a required for dimerization region; that stretch reads NSNLIPKVLI…QNNVQKSQVP (161 aa). The tract at residues 272–564 is required for interaction with NFYA; the sequence is NSNLIPKVLI…VQPKQSWNPF (293 aa). Residues 284–346 constitute a DNA-binding region (homeobox 1); the sequence is NSIPTYNAAL…LKHGVSWTPE (63 aa). The disordered stretch occupies residues 431 to 454; that stretch reads VPAAQPTAETKPATAAVPTSQSVK. Residues Lys441, Lys454, and Lys485 each participate in a glycyl lysine isopeptide (Lys-Gly) (interchain with G-Cter in SUMO2) cross-link. Residues 464-526 constitute a DNA-binding region (homeobox 2); the sequence is SFGIRAKKTK…YNQRNSKSNQ (63 aa). Disordered regions lie at residues 544-563, 626-668, and 732-769; these read DETT…SWNP, KEEK…CKKT, and SSMN…INNW. Residues 550–562 show a composition bias toward polar residues; it reads PTVGTVQPKQSWN. Residues 569-630 constitute a DNA-binding region (homeobox 3); the sequence is PQKFKEKTAE…KSKALKEEKM (62 aa). Residue Lys629 forms a Glycyl lysine isopeptide (Lys-Gly) (interchain with G-Cter in SUMO2) linkage. Ser648 bears the Phosphoserine mark. Positions 660–722 form a DNA-binding region, homeobox 4; the sequence is STGKICKKTP…YAWKNGNLKW (63 aa). The required for nuclear localization stretch occupies residues 734–768; that stretch reads MNGLSSLRKRGRGRPKGRGRGRPRGRPRGSKRINN. Residues 740-764 show a composition bias toward basic residues; the sequence is LRKRGRGRPKGRGRGRPRGRPRGSK. At Ser774 the chain carries Phosphoserine. Positions 777-832 form a DNA-binding region, homeobox 5; that stretch reads KFKTGTAILKDYYLKHKFLNEQDLDELVNKSHMGYEQVREWFAERQRRSELGIELF. The interval 829-873 is disordered; it reads IELFEENEEEDEVIDDQEEDEEETDDSDTWEPPRHVKRKLSKSDD. The segment covering 831 to 857 has biased composition (acidic residues); that stretch reads LFEENEEEDEVIDDQEEDEEETDDSDT. Residues 831–873 form a required for repressor activity region; the sequence is LFEENEEEDEVIDDQEEDEEETDDSDTWEPPRHVKRKLSKSDD. A compositionally biased stretch (basic residues) spans 863-873; that stretch reads HVKRKLSKSDD.

It belongs to the ZHX family. In terms of assembly, forms homodimers. Heterodimer (via HD1 domain) with ZHX2 (via HD1 domain). Also forms a heterodimer with ZHX3 which is a prerequisite for repressor activity. Interacts with ATF7IP and NFYA. Interacts (via homeobox domains) with DNMT3B (via PWWP domain).

It localises to the nucleus. Acts as a transcriptional repressor. Increases DNMT3B-mediated repressive transcriptional activity when DNMT3B is tethered to DNA. May link molecule between DNMT3B and other co-repressor proteins. This is Zinc fingers and homeoboxes protein 1 (ZHX1) from Pongo pygmaeus (Bornean orangutan).